The sequence spans 353 residues: Photosystem II protein D1 (353 aa).

T2 is subject to N-acetylthreonine. T2 is subject to Phosphothreonine. 3 helical membrane-spanning segments follow: residues Y29–S46, H118–L133, and W142–A156. Position 118 (H118) interacts with chlorophyll a. Residue Y126 coordinates pheophytin a. Positions 170 and 189 each coordinate [CaMn4O5] cluster. A helical transmembrane segment spans residues F197 to L218. H198 contacts chlorophyll a. Residues H215 and S264 to F265 each bind a quinone. A Fe cation-binding site is contributed by H215. Residue H272 participates in Fe cation binding. The helical transmembrane segment at F274–L288 threads the bilayer. Residues H332, E333, D342, and A344 each coordinate [CaMn4O5] cluster. A propeptide spanning residues V345–G353 is cleaved from the precursor.

It belongs to the reaction center PufL/M/PsbA/D family. In terms of assembly, PSII is composed of 1 copy each of membrane proteins PsbA, PsbB, PsbC, PsbD, PsbE, PsbF, PsbH, PsbI, PsbJ, PsbK, PsbL, PsbM, PsbT, PsbX, PsbY, PsbZ, Psb30/Ycf12, at least 3 peripheral proteins of the oxygen-evolving complex and a large number of cofactors. It forms dimeric complexes. The D1/D2 heterodimer binds P680, chlorophylls that are the primary electron donor of PSII, and subsequent electron acceptors. It shares a non-heme iron and each subunit binds pheophytin, quinone, additional chlorophylls, carotenoids and lipids. D1 provides most of the ligands for the Mn4-Ca-O5 cluster of the oxygen-evolving complex (OEC). There is also a Cl(-1) ion associated with D1 and D2, which is required for oxygen evolution. The PSII complex binds additional chlorophylls, carotenoids and specific lipids. serves as cofactor. Tyr-161 forms a radical intermediate that is referred to as redox-active TyrZ, YZ or Y-Z. In terms of processing, C-terminally processed by CTPA; processing is essential to allow assembly of the oxygen-evolving complex and thus photosynthetic growth.

Its subcellular location is the plastid. The protein resides in the chloroplast thylakoid membrane. It carries out the reaction 2 a plastoquinone + 4 hnu + 2 H2O = 2 a plastoquinol + O2. In terms of biological role, photosystem II (PSII) is a light-driven water:plastoquinone oxidoreductase that uses light energy to abstract electrons from H(2)O, generating O(2) and a proton gradient subsequently used for ATP formation. It consists of a core antenna complex that captures photons, and an electron transfer chain that converts photonic excitation into a charge separation. The D1/D2 (PsbA/PsbD) reaction center heterodimer binds P680, the primary electron donor of PSII as well as several subsequent electron acceptors. In Chlorella vulgaris (Green alga), this protein is Photosystem II protein D1.